The sequence spans 472 residues: 3-isopropylmalate dehydratase large subunit (472 aa).

Residues cysteine 347, cysteine 407, and cysteine 410 each contribute to the [4Fe-4S] cluster site.

It belongs to the aconitase/IPM isomerase family. LeuC type 1 subfamily. Heterodimer of LeuC and LeuD. [4Fe-4S] cluster is required as a cofactor.

The enzyme catalyses (2R,3S)-3-isopropylmalate = (2S)-2-isopropylmalate. It functions in the pathway amino-acid biosynthesis; L-leucine biosynthesis; L-leucine from 3-methyl-2-oxobutanoate: step 2/4. In terms of biological role, catalyzes the isomerization between 2-isopropylmalate and 3-isopropylmalate, via the formation of 2-isopropylmaleate. The chain is 3-isopropylmalate dehydratase large subunit from Synechococcus sp. (strain CC9902).